The primary structure comprises 31 residues: Cytochrome b6-f complex subunit 6 (31 aa).

The helical transmembrane segment at 4–26 threads the bilayer; sequence LTSYFGFLLAALTITSALFIGLS.

This sequence belongs to the PetL family. In terms of assembly, the 4 large subunits of the cytochrome b6-f complex are cytochrome b6, subunit IV (17 kDa polypeptide, PetD), cytochrome f and the Rieske protein, while the 4 small subunits are PetG, PetL, PetM and PetN. The complex functions as a dimer.

It is found in the plastid. The protein localises to the chloroplast thylakoid membrane. Component of the cytochrome b6-f complex, which mediates electron transfer between photosystem II (PSII) and photosystem I (PSI), cyclic electron flow around PSI, and state transitions. PetL is important for photoautotrophic growth as well as for electron transfer efficiency and stability of the cytochrome b6-f complex. This is Cytochrome b6-f complex subunit 6 from Aethionema grandiflorum (Persian stone-cress).